Consider the following 201-residue polypeptide: Large ribosomal subunit protein uL4 (201 aa).

Residues 45-71 are disordered; it reads AQKTRAEVTGSGKKPWRQKGTGRARAG.

It belongs to the universal ribosomal protein uL4 family. As to quaternary structure, part of the 50S ribosomal subunit.

Functionally, one of the primary rRNA binding proteins, this protein initially binds near the 5'-end of the 23S rRNA. It is important during the early stages of 50S assembly. It makes multiple contacts with different domains of the 23S rRNA in the assembled 50S subunit and ribosome. Its function is as follows. Forms part of the polypeptide exit tunnel. In Shewanella loihica (strain ATCC BAA-1088 / PV-4), this protein is Large ribosomal subunit protein uL4.